A 483-amino-acid chain; its full sequence is Phloretin 2'-O-glucosyltransferase (483 aa).

The Proton acceptor role is filled by His-15. Residue His-15 coordinates an anthocyanidin. Residue Asp-118 is the Charge relay of the active site. Positions 140, 360, 362, 377, 380, 381, 382, and 385 each coordinate UDP-alpha-D-glucose. Ala-400 serves as a coordination point for an anthocyanidin. Positions 401 and 402 each coordinate UDP-alpha-D-glucose.

This sequence belongs to the UDP-glycosyltransferase family.

The catalysed reaction is phloretin + UDP-alpha-D-glucose = phlorizin + UDP + H(+). Functionally, glycosyltransferase that possesses phloretin 2'-O-glycosyltransferase activity. Converts phloretin to phlorizin (phloretin 2'-O-glucoside), a potent antioxidant. Is specific for phloretin and does not possess glycosyltransferase activity toward naringenin, naringenin chalcone, eriodictyol, eriodictyol chalcone, apigenin, luteolin, kaempferol, quercetin, isoliquiritigenin, butein, caffeic acid, 2-coumaric acid, 3-coumaric acid, 3-hydroxybenzoic acid, 3,4-dihydroxybenzoic acid and 3,4-dihydroxyhydrocinnamic acid. Can glycosylate phloretin in the presence of UDP-glucose, UDP-xylose and UDP-galactose. The sequence is that of Phloretin 2'-O-glucosyltransferase from Pyrus communis (Pear).